The primary structure comprises 175 residues: MGKITFYEDRGFQGRCYECSSDCPNLQPYFSRCNSIRVDSGCWMLYERPNYQGHQYFLRRGDYPDYQQWLGFSDSIRSCRLIPQHSGTFRMRIYERDDFRGQMSEITDDCLSLQDRFHLNEIHSLNVLDGCWVLYEMPSYRGRQYLLRPGEYRRYLDWGAMNAKVGSLRRVMDFY.

Beta/gamma crystallin 'Greek key' domains lie at 2-40 (GKIT…RVDS) and 41-83 (GCWM…RLIP). The tract at residues 84-88 (QHSGT) is connecting peptide. Beta/gamma crystallin 'Greek key' domains lie at 89 to 129 (FRMR…NVLD) and 130 to 172 (GCWV…RRVM).

Belongs to the beta/gamma-crystallin family. As to quaternary structure, monomer.

Functionally, crystallins are the dominant structural components of the vertebrate eye lens. This Canis lupus familiaris (Dog) protein is Gamma-crystallin B (CRYGB).